Reading from the N-terminus, the 148-residue chain is MSIIDNRKAHFDYHIEERYEAGLVLEGWEVKALRAGRGQIKEGYVVVKNAEIFLIGTHISPLPEASTHIKPDPVRTRKLLLHREEIKKLIGKVEQRGYTLVPLNFHYKGGRVKCDIALAKGKKLHDKRETEKKRDWEREKARIMRAGT.

The segment covering 129–142 (ETEKKRDWEREKAR) has biased composition (basic and acidic residues). Positions 129-148 (ETEKKRDWEREKARIMRAGT) are disordered.

The protein belongs to the SmpB family.

Its subcellular location is the cytoplasm. Required for rescue of stalled ribosomes mediated by trans-translation. Binds to transfer-messenger RNA (tmRNA), required for stable association of tmRNA with ribosomes. tmRNA and SmpB together mimic tRNA shape, replacing the anticodon stem-loop with SmpB. tmRNA is encoded by the ssrA gene; the 2 termini fold to resemble tRNA(Ala) and it encodes a 'tag peptide', a short internal open reading frame. During trans-translation Ala-aminoacylated tmRNA acts like a tRNA, entering the A-site of stalled ribosomes, displacing the stalled mRNA. The ribosome then switches to translate the ORF on the tmRNA; the nascent peptide is terminated with the 'tag peptide' encoded by the tmRNA and targeted for degradation. The ribosome is freed to recommence translation, which seems to be the essential function of trans-translation. In Burkholderia orbicola (strain AU 1054), this protein is SsrA-binding protein.